The sequence spans 272 residues: Dermonecrotic toxin LspaSicTox-alphaII1 (272 aa).

H5 is an active-site residue. Positions 25 and 27 each coordinate Mg(2+). H41 serves as the catalytic Nucleophile. 2 disulfide bridges follow: C45–C51 and C47–C190. D85 contributes to the Mg(2+) binding site.

The protein belongs to the arthropod phospholipase D family. Class II subfamily. Requires Mg(2+) as cofactor. Expressed by the venom gland.

It localises to the secreted. The enzyme catalyses an N-(acyl)-sphingosylphosphocholine = an N-(acyl)-sphingosyl-1,3-cyclic phosphate + choline. It catalyses the reaction an N-(acyl)-sphingosylphosphoethanolamine = an N-(acyl)-sphingosyl-1,3-cyclic phosphate + ethanolamine. The catalysed reaction is a 1-acyl-sn-glycero-3-phosphocholine = a 1-acyl-sn-glycero-2,3-cyclic phosphate + choline. It carries out the reaction a 1-acyl-sn-glycero-3-phosphoethanolamine = a 1-acyl-sn-glycero-2,3-cyclic phosphate + ethanolamine. In terms of biological role, dermonecrotic toxins cleave the phosphodiester linkage between the phosphate and headgroup of certain phospholipids (sphingolipid and lysolipid substrates), forming an alcohol (often choline) and a cyclic phosphate. This toxin acts on sphingomyelin (SM). It may also act on ceramide phosphoethanolamine (CPE), lysophosphatidylcholine (LPC) and lysophosphatidylethanolamine (LPE), but not on lysophosphatidylserine (LPS), and lysophosphatidylglycerol (LPG). It acts by transphosphatidylation, releasing exclusively cyclic phosphate products as second products. Induces dermonecrosis, hemolysis, increased vascular permeability, edema, inflammatory response, and platelet aggregation. The protein is Dermonecrotic toxin LspaSicTox-alphaII1 of Loxosceles spadicea (Recluse spider).